The following is a 263-amino-acid chain: MEKRIELERRARKANQIQELNLDNCRSTSIVGLTDEYTALESLSLINVGLTTLKGFPKLPNLKKLELSDNRISSGLNYLTTSPKLQYLNLSGNKIKDLETLKPLEEFKSLAVLDLFNNDATQVDNYREKIFKMLPSLNFLDGFDCNDEEAQSEGDDDEEVNGNDSEEEVSGDDDEEDGDSDDSDEDGDNGEVSLSEVYNDDLEEDNSDWEEGEGGGDDDEEDSDIDDADGEANESSASLNASKKEPEKTDESQARGKKRKHDG.

4 LRR repeats span residues 16–37, 39–60, 61–83, and 84–105; these read QIQE…TDEY, ALES…PKLP, NLKK…TTSP, and KLQY…KPLE. Residues 118–156 form the LRRCT domain; the sequence is NDATQVDNYREKIFKMLPSLNFLDGFDCNDEEAQSEGDD. Composition is skewed to acidic residues over residues 144–189 and 198–232; these read DCND…DGDN and YNDD…DGEA. A disordered region spans residues 144 to 263; it reads DCNDEEAQSE…ARGKKRKHDG (120 aa). A compositionally biased stretch (basic and acidic residues) spans 242 to 254; that stretch reads SKKEPEKTDESQA.

The protein belongs to the ANP32 family. Post-translationally, phosphorylated on serine residues.

Its subcellular location is the nucleus. It is found in the cytoplasm. Its function is as follows. Implicated in a number of cellular processes, including proliferation, differentiation, caspase-dependent and caspase-independent apoptosis, suppression of transformation (tumor suppressor), inhibition of protein phosphatase 2A, regulation of mRNA trafficking and stability, and inhibition of acetyltransferases as part of the INHAT (inhibitor of histone acetyltransferases) complex. The chain is Acidic leucine-rich nuclear phosphoprotein 32 family member A (Anp32a) from Drosophila pseudoobscura pseudoobscura (Fruit fly).